A 290-amino-acid chain; its full sequence is Glutamyl-Q tRNA(Asp) synthetase (290 aa).

Residues 9–13 (RFAPS) and Glu45 each bind L-glutamate. The 'HIGH' region motif lies at 12-22 (PSPSGSLHFGS). Residues Cys101, Cys103, Tyr115, and Cys119 each coordinate Zn(2+). The L-glutamate site is built by Tyr170 and Arg188. The short motif at 226–230 (KLSKQ) is the 'KMSKS' region element. ATP is bound at residue Lys229.

It belongs to the class-I aminoacyl-tRNA synthetase family. GluQ subfamily. Requires Zn(2+) as cofactor.

In terms of biological role, catalyzes the tRNA-independent activation of glutamate in presence of ATP and the subsequent transfer of glutamate onto a tRNA(Asp). Glutamate is transferred on the 2-amino-5-(4,5-dihydroxy-2-cyclopenten-1-yl) moiety of the queuosine in the wobble position of the QUC anticodon. The protein is Glutamyl-Q tRNA(Asp) synthetase of Shewanella amazonensis (strain ATCC BAA-1098 / SB2B).